The sequence spans 67 residues: MAELPVAPCVRILKKAGAQRVSEAAGKYFAEALEEIALEIARKSVDLAKHAKRKTVKVEDVKAALRG.

Interaction with DNA stretches follow at residues 20 to 22 (RVS) and 54 to 57 (KTVK).

It belongs to the archaeal histone HMF family. Homodimer or heterodimer with another histone. Dimers then assemble into higher oligomers, with the DNA wrapped around the protein core.

The protein resides in the cytoplasm. It is found in the chromosome. Functionally, binds and compact DNA (95 to 150 base pairs) to form nucleosome-like structures that contain positive DNA supercoils. Increases the resistance of DNA to thermal denaturation (in vitro). The polypeptide is Probable archaeal histone 3 (Methanocaldococcus jannaschii (strain ATCC 43067 / DSM 2661 / JAL-1 / JCM 10045 / NBRC 100440) (Methanococcus jannaschii)).